The following is a 198-amino-acid chain: Endonuclease V (198 aa).

Residues D38 and D101 each coordinate Mg(2+).

It belongs to the endonuclease V family. Requires Mg(2+) as cofactor.

It localises to the cytoplasm. It carries out the reaction Endonucleolytic cleavage at apurinic or apyrimidinic sites to products with a 5'-phosphate.. In terms of biological role, DNA repair enzyme involved in the repair of deaminated bases. Selectively cleaves double-stranded DNA at the second phosphodiester bond 3' to a deoxyinosine leaving behind the intact lesion on the nicked DNA. This is Endonuclease V from Saccharolobus islandicus (strain M.16.4 / Kamchatka #3) (Sulfolobus islandicus).